The following is a 261-amino-acid chain: Acyl-[acyl-carrier-protein]--UDP-N-acetylglucosamine O-acyltransferase (261 aa).

The protein belongs to the transferase hexapeptide repeat family. LpxA subfamily. As to quaternary structure, homotrimer.

The protein resides in the cytoplasm. The enzyme catalyses a (3R)-hydroxyacyl-[ACP] + UDP-N-acetyl-alpha-D-glucosamine = a UDP-3-O-[(3R)-3-hydroxyacyl]-N-acetyl-alpha-D-glucosamine + holo-[ACP]. Its pathway is glycolipid biosynthesis; lipid IV(A) biosynthesis; lipid IV(A) from (3R)-3-hydroxytetradecanoyl-[acyl-carrier-protein] and UDP-N-acetyl-alpha-D-glucosamine: step 1/6. Involved in the biosynthesis of lipid A, a phosphorylated glycolipid that anchors the lipopolysaccharide to the outer membrane of the cell. The chain is Acyl-[acyl-carrier-protein]--UDP-N-acetylglucosamine O-acyltransferase from Sulfurimonas denitrificans (strain ATCC 33889 / DSM 1251) (Thiomicrospira denitrificans (strain ATCC 33889 / DSM 1251)).